Here is a 358-residue protein sequence, read N- to C-terminus: Magnesium-protoporphyrin IX monomethyl ester [oxidative] cyclase 2 (358 aa).

Belongs to the AcsF family. The cofactor is Fe cation.

The enzyme catalyses Mg-protoporphyrin IX 13-monomethyl ester + 3 NADPH + 3 O2 + 2 H(+) = 3,8-divinyl protochlorophyllide a + 3 NADP(+) + 5 H2O. It participates in porphyrin-containing compound metabolism; chlorophyll biosynthesis (light-independent). Catalyzes the formation of the isocyclic ring in chlorophyll biosynthesis. Mediates the cyclase reaction, which results in the formation of divinylprotochlorophyllide (Pchlide) characteristic of all chlorophylls from magnesium-protoporphyrin IX 13-monomethyl ester (MgPMME). In Nostoc sp. (strain PCC 7120 / SAG 25.82 / UTEX 2576), this protein is Magnesium-protoporphyrin IX monomethyl ester [oxidative] cyclase 2.